Here is a 451-residue protein sequence, read N- to C-terminus: Clusterin (451 aa).

A signal peptide spans 1–18 (MELPLLALLSLGLVCQGG). Intrachain disulfides connect cysteine 98–cysteine 314, cysteine 109–cysteine 306, cysteine 112–cysteine 303, cysteine 117–cysteine 296, and cysteine 125–cysteine 286. Residues asparagine 99, asparagine 141, asparagine 278, asparagine 355, asparagine 375, and asparagine 447 are each glycosylated (N-linked (GlcNAc...) asparagine).

This sequence belongs to the clusterin family. In terms of assembly, antiparallel disulfide-linked heterodimer of an alpha chain and a beta chain. Self-associates and forms higher oligomers. Interacts with a broad range of misfolded proteins. In terms of processing, proteolytically cleaved on its way through the secretory system, probably within the Golgi lumen. Post-translationally, polyubiquitinated, leading to proteasomal degradation.

The protein resides in the secreted. It is found in the cytoplasmic vesicle. The protein localises to the secretory vesicle. It localises to the chromaffin granule. Its subcellular location is the nucleus. The protein resides in the cytoplasm. It is found in the mitochondrion membrane. The protein localises to the cytosol. It localises to the endoplasmic reticulum. Functions as extracellular chaperone that prevents aggregation of nonnative proteins. Prevents stress-induced aggregation of blood plasma proteins. Does not require ATP. Maintains partially unfolded proteins in a state appropriate for subsequent refolding by other chaperones, such as HSPA8/HSC70. Does not refold proteins by itself. Binding to cell surface receptors triggers internalization of the chaperone-client complex and subsequent lysosomal or proteasomal degradation. When secreted, protects cells against apoptosis and against cytolysis by complement: inhibits assembly of the complement membrane attack complex (MAC) by preventing polymerization of C9 pore component of the MAC complex. Intracellular forms interact with ubiquitin and SCF (SKP1-CUL1-F-box protein) E3 ubiquitin-protein ligase complexes and promote the ubiquitination and subsequent proteasomal degradation of target proteins. Modulates NF-kappa-B transcriptional activity. Promotes apoptosis when in the nucleus. Inhibits apoptosis when associated with the mitochondrial membrane by interference with BAX-dependent release of cytochrome c into the cytoplasm. Plays a role in the regulation of cell proliferation. The chain is Clusterin (CLU) from Coturnix japonica (Japanese quail).